We begin with the raw amino-acid sequence, 278 residues long: Large ribosomal subunit protein uL2c (278 aa).

Residues 224–267 (VVMNPVDHPHGGGEGRAPIGRKKPLTPWGHTALGGRSRKNHKYS) form a disordered region.

This sequence belongs to the universal ribosomal protein uL2 family. In terms of assembly, part of the 50S ribosomal subunit.

It localises to the plastid. Its subcellular location is the chloroplast. The protein is Large ribosomal subunit protein uL2c (rpl2) of Huperzia lucidula (Shining clubmoss).